The sequence spans 327 residues: UDP-glucose 4-epimerase (327 aa).

Residue Thr119 participates in substrate binding. Residue Tyr143 is the Proton acceptor of the active site.

This sequence belongs to the NAD(P)-dependent epimerase/dehydratase family. The cofactor is NAD(+).

It carries out the reaction UDP-alpha-D-glucose = UDP-alpha-D-galactose. The protein operates within carbohydrate metabolism; galactose metabolism. Its pathway is glycan metabolism; exopolysaccharide biosynthesis. In Rhizobium leguminosarum bv. trifolii, this protein is UDP-glucose 4-epimerase (exoB).